Here is a 179-residue protein sequence, read N- to C-terminus: Repressor of phase 1 flagellin gene (179 aa).

Functionally, transcriptional repressor of the FliC phase-1 flagellin. The protein is Repressor of phase 1 flagellin gene (fljA) of Salmonella typhimurium (strain LT2 / SGSC1412 / ATCC 700720).